Reading from the N-terminus, the 208-residue chain is N-(5'-phosphoribosyl)anthranilate isomerase (208 aa).

This sequence belongs to the TrpF family.

It carries out the reaction N-(5-phospho-beta-D-ribosyl)anthranilate = 1-(2-carboxyphenylamino)-1-deoxy-D-ribulose 5-phosphate. The protein operates within amino-acid biosynthesis; L-tryptophan biosynthesis; L-tryptophan from chorismate: step 3/5. The sequence is that of N-(5'-phosphoribosyl)anthranilate isomerase from Nitrosomonas eutropha (strain DSM 101675 / C91 / Nm57).